The primary structure comprises 59 residues: Large ribosomal subunit protein uL30 (59 aa).

Belongs to the universal ribosomal protein uL30 family. Part of the 50S ribosomal subunit.

The sequence is that of Large ribosomal subunit protein uL30 from Desulforamulus reducens (strain ATCC BAA-1160 / DSM 100696 / MI-1) (Desulfotomaculum reducens).